Reading from the N-terminus, the 3165-residue chain is ORFB polyprotein (3165 aa).

Positions 271–418 (MARSIGLSHE…LENEPDILVG (148 aa)) constitute a Peptidase C8 domain. Residues Cys341 and His388 each act as for papain-like protease p48 activity in the active site. The disordered stretch occupies residues 453–472 (AEPGQRAKDNTNPSTPRPIE). 6 helical membrane passes run 791 to 811 (IMIASSVAFLVPLYFTLYVPY), 823 to 843 (YILLPPVLWLVWTNLCYGYAC), 1166 to 1186 (AGLFWWYGCLHLLPFMAAAIM), 1193 to 1213 (KYLVGMAWLTEPGLLMLKALW), 1215 to 1235 (FPIFMVTPRWMLPFIVTVSVY), and 1356 to 1376 (ALGFVFAYMVSWAVYLVLRPP). The interval 1793–2208 (FYKSRKALKQ…AEDSADYRAW (416 aa)) is RNA-directed RNA polymerase. A run of 3 helical transmembrane segments spans residues 2495 to 2515 (VRIYQGMTVIISAMYFAMHWV), 2517 to 2537 (LFIQSLFLIGPLYNLFMWSFW), and 2590 to 2610 (LGIVPVTLVLDGLAEIIEVLF). The region spanning 2651–2796 (ATKAIEHGHV…IPFLEPTLPK (146 aa)) is the Helicase ATP-binding domain. Residue 2664–2671 (AKTASGKS) coordinates ATP. A DEFH box motif is present at residues 2751 to 2754 (DEFH).

This sequence in the C-terminal section; belongs to the DEAD box helicase family. Papain-like protease p48 is autocatalytically processed. The putative RNA-directed RNA polymerase/helicase may be further processed.

Its subcellular location is the host membrane. The enzyme catalyses RNA(n) + a ribonucleoside 5'-triphosphate = RNA(n+1) + diphosphate. It carries out the reaction ATP + H2O = ADP + phosphate + H(+). Its function is as follows. Papain-like protease p48 is a cysteine protease of the peptidase family C8. This is ORFB polyprotein from Cryphonectria hypovirus 1 (strain EP713) (CHV-1/EP713).